A 161-amino-acid chain; its full sequence is Large ribosomal subunit protein uL11 (161 aa).

This sequence belongs to the universal ribosomal protein uL11 family. Part of the ribosomal stalk of the 50S ribosomal subunit. Interacts with L10 and the large rRNA to form the base of the stalk. L10 forms an elongated spine to which L12 dimers bind in a sequential fashion forming a multimeric L10(L12)X complex.

In terms of biological role, forms part of the ribosomal stalk which helps the ribosome interact with GTP-bound translation factors. The chain is Large ribosomal subunit protein uL11 from Methanosarcina mazei (strain ATCC BAA-159 / DSM 3647 / Goe1 / Go1 / JCM 11833 / OCM 88) (Methanosarcina frisia).